The sequence spans 295 residues: Pyridoxal 5'-phosphate synthase subunit PdxS (295 aa).

Asp-25 serves as a coordination point for D-ribose 5-phosphate. Lys-82 acts as the Schiff-base intermediate with D-ribose 5-phosphate in catalysis. Gly-154 provides a ligand contact to D-ribose 5-phosphate. Arg-166 lines the D-glyceraldehyde 3-phosphate pocket. Residues Gly-215 and 236–237 (GS) contribute to the D-ribose 5-phosphate site.

The protein belongs to the PdxS/SNZ family. As to quaternary structure, in the presence of PdxT, forms a dodecamer of heterodimers.

It catalyses the reaction aldehydo-D-ribose 5-phosphate + D-glyceraldehyde 3-phosphate + L-glutamine = pyridoxal 5'-phosphate + L-glutamate + phosphate + 3 H2O + H(+). It functions in the pathway cofactor biosynthesis; pyridoxal 5'-phosphate biosynthesis. In terms of biological role, catalyzes the formation of pyridoxal 5'-phosphate from ribose 5-phosphate (RBP), glyceraldehyde 3-phosphate (G3P) and ammonia. The ammonia is provided by the PdxT subunit. Can also use ribulose 5-phosphate and dihydroxyacetone phosphate as substrates, resulting from enzyme-catalyzed isomerization of RBP and G3P, respectively. The protein is Pyridoxal 5'-phosphate synthase subunit PdxS of Bacillus anthracis (strain A0248).